Here is a 179-residue protein sequence, read N- to C-terminus: ATP synthase subunit delta (179 aa).

Belongs to the ATPase delta chain family. F-type ATPases have 2 components, F(1) - the catalytic core - and F(0) - the membrane proton channel. F(1) has five subunits: alpha(3), beta(3), gamma(1), delta(1), epsilon(1). F(0) has three main subunits: a(1), b(2) and c(10-14). The alpha and beta chains form an alternating ring which encloses part of the gamma chain. F(1) is attached to F(0) by a central stalk formed by the gamma and epsilon chains, while a peripheral stalk is formed by the delta and b chains.

The protein resides in the cell membrane. Its function is as follows. F(1)F(0) ATP synthase produces ATP from ADP in the presence of a proton or sodium gradient. F-type ATPases consist of two structural domains, F(1) containing the extramembraneous catalytic core and F(0) containing the membrane proton channel, linked together by a central stalk and a peripheral stalk. During catalysis, ATP synthesis in the catalytic domain of F(1) is coupled via a rotary mechanism of the central stalk subunits to proton translocation. This protein is part of the stalk that links CF(0) to CF(1). It either transmits conformational changes from CF(0) to CF(1) or is implicated in proton conduction. The polypeptide is ATP synthase subunit delta (Mycoplasmopsis pulmonis (strain UAB CTIP) (Mycoplasma pulmonis)).